The chain runs to 156 residues: 3-dehydroquinate dehydratase (156 aa).

The active-site Proton acceptor is Tyr24. 3 residues coordinate substrate: Asn76, His82, and Asp89. The active-site Proton donor is the His102. Residues Ile103–Ser104 and Arg113 each bind substrate.

It belongs to the type-II 3-dehydroquinase family. In terms of assembly, homododecamer.

The catalysed reaction is 3-dehydroquinate = 3-dehydroshikimate + H2O. It functions in the pathway metabolic intermediate biosynthesis; chorismate biosynthesis; chorismate from D-erythrose 4-phosphate and phosphoenolpyruvate: step 3/7. In terms of biological role, catalyzes a trans-dehydration via an enolate intermediate. The sequence is that of 3-dehydroquinate dehydratase from Nitrobacter winogradskyi (strain ATCC 25391 / DSM 10237 / CIP 104748 / NCIMB 11846 / Nb-255).